The chain runs to 164 residues: Pyruvoyl-dependent arginine decarboxylase (164 aa).

Ser-52 carries the post-translational modification Pyruvic acid (Ser).

It belongs to the PdaD family. Requires pyruvate as cofactor.

The enzyme catalyses L-arginine + H(+) = agmatine + CO2. This is Pyruvoyl-dependent arginine decarboxylase from Methanococcus maripaludis (strain C7 / ATCC BAA-1331).